Reading from the N-terminus, the 846-residue chain is Vinculin (846 aa).

The interval 1-257 is interaction with TLN; the sequence is MPVKFHTKTL…VLQLTTTFEE (257 aa). Positions 315–370 form a coiled coil; the sequence is RAKLLAAADELDQILKELEELQAKGLGDSRQARALAHAAAVKLQELEQEIRKALAE. A disordered region spans residues 617-646; it reads WVPPRPPLPELEEEEEPPELPPPPEDPASL.

The protein belongs to the vinculin/alpha-catenin family. Monomer. Interacts with TLN (talin); the interaction facilitates VIN1 binding to F-actin. As to expression, expressed in epithelial tissues, specifically the pinacoderm (outer epithelium) and choanoderm (feeding epithelium) (at protein level). Also detected in migratory cells of the mesohyl (at protein level).

It localises to the cytoplasm. The protein localises to the cell cortex. Its subcellular location is the cell projection. The protein resides in the filopodium. It is found in the cytoskeleton. Functionally, actin filament (F-actin)-binding protein which may play a role in cell-cell adhesion. The polypeptide is Vinculin (Oscarella pearsei (Sponge)).